The sequence spans 653 residues: UvrABC system protein B (653 aa).

The Helicase ATP-binding domain occupies 25 to 182 (EGIERGVREQ…EKLVELQYKS (158 aa)). 38-45 (GVTGSGKT) is an ATP binding site. The short motif at 91–114 (YYDYYQPEAYIPHSDVYIEKDALI) is the Beta-hairpin element. Positions 429 to 591 (QIADVVNESQ…ITPKSISKSV (163 aa)) constitute a Helicase C-terminal domain. A UVR domain is found at 616 to 651 (EEDIIKLQKEMLLHAENLEFEKALEIRNQINKLSQH).

It belongs to the UvrB family. Forms a heterotetramer with UvrA during the search for lesions. Interacts with UvrC in an incision complex.

The protein localises to the cytoplasm. In terms of biological role, the UvrABC repair system catalyzes the recognition and processing of DNA lesions. A damage recognition complex composed of 2 UvrA and 2 UvrB subunits scans DNA for abnormalities. Upon binding of the UvrA(2)B(2) complex to a putative damaged site, the DNA wraps around one UvrB monomer. DNA wrap is dependent on ATP binding by UvrB and probably causes local melting of the DNA helix, facilitating insertion of UvrB beta-hairpin between the DNA strands. Then UvrB probes one DNA strand for the presence of a lesion. If a lesion is found the UvrA subunits dissociate and the UvrB-DNA preincision complex is formed. This complex is subsequently bound by UvrC and the second UvrB is released. If no lesion is found, the DNA wraps around the other UvrB subunit that will check the other stand for damage. The sequence is that of UvrABC system protein B from Anaplasma phagocytophilum (strain HZ).